A 171-amino-acid polypeptide reads, in one-letter code: Ribosome maturation factor RimM (171 aa).

Residues 97–169 form the PRC barrel domain; the sequence is DGEFYYHEII…RVDVSIMEGL (73 aa).

It belongs to the RimM family. In terms of assembly, binds ribosomal protein uS19.

Its subcellular location is the cytoplasm. An accessory protein needed during the final step in the assembly of 30S ribosomal subunit, possibly for assembly of the head region. Essential for efficient processing of 16S rRNA. May be needed both before and after RbfA during the maturation of 16S rRNA. It has affinity for free ribosomal 30S subunits but not for 70S ribosomes. The protein is Ribosome maturation factor RimM of Lactococcus lactis subsp. lactis (strain IL1403) (Streptococcus lactis).